A 1176-amino-acid chain; its full sequence is Condensin complex subunit 1 (1176 aa).

Ser-464 and Ser-475 each carry phosphoserine.

This sequence belongs to the CND1 (condensin subunit 1) family. In terms of assembly, component of the condensin complex, which contains the SMC2 and SMC4 heterodimer, and three non SMC subunits that probably regulate the complex: BRN1, YCS4 and YCG1/YCS5.

The protein localises to the nucleus. It localises to the chromosome. Functionally, regulatory subunit of the condensin complex, a complex required for conversion of interphase chromatin into mitotic-like condense chromosomes. The condensin complex probably introduces positive supercoils into relaxed DNA in the presence of type I topoisomerases and converts nicked DNA into positive knotted forms in the presence of type II topoisomerases. The condensin complex probably also plays a role during interphase. The chain is Condensin complex subunit 1 (YCS4) from Saccharomyces cerevisiae (strain ATCC 204508 / S288c) (Baker's yeast).